Consider the following 354-residue polypeptide: Guanine nucleotide-binding protein alpha-2 subunit (354 aa).

The G-alpha domain occupies 33–354; the sequence is KIYKVLLLGA…QHSLKEAGMF (322 aa). Positions 36–49 are G1 motif; that stretch reads KVLLLGASDSGKST. Residues D44, S45, G46, K47, S48, T49, D148, L173, T179, G201, N269, K270, D272, and A326 each contribute to the GTP site. S48 is a binding site for Mg(2+). The G2 motif stretch occupies residues 171-179; the sequence is DILRSRNST. T179 serves as a coordination point for Mg(2+). Positions 194–203 are G3 motif; sequence IRMFDVGGQR. The tract at residues 265–272 is G4 motif; that stretch reads ILFLNKFD. The interval 324 to 329 is G5 motif; it reads TTAVDT.

This sequence belongs to the G-alpha family. G proteins are composed of 3 units; alpha, beta and gamma. Binding of the beta-gamma subunit complex (git5-git11) to the alpha subunit (gpa2) facilitates interaction with GPCR git3. Interacts with GPCR git3; the interaction is direct and leads to activation of gpa2 upon glucose stimulation. Interacts with adenylate cyclase cyr1 (via N-terminus); the interaction is direct and serves to activate adenylate cyclase and cAMP-PKA signaling, to repress sexual development and gluconeogenesis. Mg(2+) serves as cofactor.

The protein resides in the cell membrane. Functionally, alpha subunit of the heterotrimeric guanine nucleotide-binding protein (G protein) involved in glucose-induced cAMP signaling. Binds to its cognate transmembrane receptor git3, which senses extracellular glucose, and activates cAMP-PKA signaling to repress sexual development and gluconeogenesis. This is Guanine nucleotide-binding protein alpha-2 subunit from Schizosaccharomyces pombe (strain 972 / ATCC 24843) (Fission yeast).